The primary structure comprises 1405 residues: DNA-directed RNA polymerase subunit beta' (1405 aa).

The Zn(2+) site is built by C70, C72, C85, and C88. The Mg(2+) site is built by D460, D462, and D464. Residues C814, C888, C895, and C898 each coordinate Zn(2+).

The protein belongs to the RNA polymerase beta' chain family. In terms of assembly, the RNAP catalytic core consists of 2 alpha, 1 beta, 1 beta' and 1 omega subunit. When a sigma factor is associated with the core the holoenzyme is formed, which can initiate transcription. The cofactor is Mg(2+). Requires Zn(2+) as cofactor.

The enzyme catalyses RNA(n) + a ribonucleoside 5'-triphosphate = RNA(n+1) + diphosphate. Functionally, DNA-dependent RNA polymerase catalyzes the transcription of DNA into RNA using the four ribonucleoside triphosphates as substrates. This Shewanella oneidensis (strain ATCC 700550 / JCM 31522 / CIP 106686 / LMG 19005 / NCIMB 14063 / MR-1) protein is DNA-directed RNA polymerase subunit beta'.